Reading from the N-terminus, the 589-residue chain is Serine/threonine-protein phosphatase 2A 65 kDa regulatory subunit A alpha isoform (589 aa).

Ala-2 carries the N-acetylalanine modification. HEAT repeat units lie at residues 8-46, 47-84, 85-123, 124-161, 162-200, 201-239, 240-278, 279-321, 322-360, 361-399, 400-438, 439-477, 478-516, 517-555, and 556-589; these read DSLY…GVER, TRSE…GGPE, YVHC…SPSD, LEAH…VSSA, VKAE…ELDN, VKSE…PQED, LEAL…GPEI, TKTD…RENV, IMTQ…GKDS, TIEH…GIRQ, LSQS…GVEF, FDEK…GKEW, AHAT…GQDI, TTKH…DNST, and LQSE…LSLA. Positions 8–399 are PP2A subunit B binding; it reads DSLYPIAVLI…CVNEVIGIRQ (392 aa). Positions 47 to 321 are polyoma small and medium T antigens Binding; it reads TRSELLPFLT…NLSADCRENV (275 aa). Positions 85–239 are SV40 small T antigen binding; sequence YVHCLLPPLE…NIAQLLPQED (155 aa). N6-acetyllysine is present on Lys-280. Residues 400 to 589 form a PP2A subunit C binding region; the sequence is LSQSLLPAIV…QEALTVLSLA (190 aa).

It belongs to the phosphatase 2A regulatory subunit A family. In terms of assembly, PP2A consists of a common heterodimeric core enzyme, composed of PPP2CA a 36 kDa catalytic subunit (subunit C) and PPP2R1A a 65 kDa constant regulatory subunit (PR65 or subunit A), that associates with a variety of regulatory subunits. Proteins that associate with the core dimer include three families of regulatory subunits B (the R2/B/PR55/B55, R3/B''/PR72/PR130/PR59 and R5/B'/B56 families), the 48 kDa variable regulatory subunit, viral proteins, and cell signaling molecules. Found in a complex with at least ARL2, PPP2CB, PPP2R1A, PPP2R2A, PPP2R5E and TBCD. Interacts with the PP2A C catalytic subunit PPP2CA. Interacts with the PP2A B subunit PPP2R2A. Interacts with the PP2A B subunit PPP2R5D. Interacts with FOXO1; the interaction dephosphorylates FOXO1 on AKT-mediated phosphorylation sites. Interacts with IPO9. Interacts with TP53 and SGO1. Interacts with PLA2G16; this interaction might decrease PP2A activity. Interacts with CTTNBP2NL. Interacts with GNA12; the interaction promotes protein phosphatase 2A activation causing dephosphorylation of MAPT. Interacts with CIP2A; this interaction stabilizes CIP2A. Interacts with PABIR1/FAM122A. Interacts with ADCY8; antagonizes interaction between ADCY8 and calmodulin. Interacts with CRTC3 (when phosphorylated at 'Ser-391'). Interacts with SPRY2. Part of the core of STRIPAK complexes composed of PP2A catalytic and scaffolding subunits, the striatins (PP2A regulatory subunits), the striatin-associated proteins MOB4, STRIP1 and STRIP2, PDCD10 and members of the STE20 kinases, such as STK24 and STK26. Component of the Integrator-PP2A (INTAC) complex, composed of the Integrator core complex and protein phosphatase 2A subunits PPP2CA and PPP2R1A.

The protein resides in the cytoplasm. It localises to the nucleus. The protein localises to the chromosome. Its subcellular location is the centromere. It is found in the lateral cell membrane. The protein resides in the cell projection. It localises to the dendrite. Its function is as follows. The PR65 subunit of protein phosphatase 2A serves as a scaffolding molecule to coordinate the assembly of the catalytic subunit and a variable regulatory B subunit. Upon interaction with GNA12 promotes dephosphorylation of microtubule associated protein TAU/MAPT. Required for proper chromosome segregation and for centromeric localization of SGO1 in mitosis. Together with RACK1 adapter, mediates dephosphorylation of AKT1 at 'Ser-473', preventing AKT1 activation and AKT-mTOR signaling pathway. Dephosphorylation of AKT1 is essential for regulatory T-cells (Treg) homeostasis and stability. Part of the striatin-interacting phosphatase and kinase (STRIPAK) complexes. STRIPAK complexes have critical roles in protein (de)phosphorylation and are regulators of multiple signaling pathways including Hippo, MAPK, nuclear receptor and cytoskeleton remodeling. Different types of STRIPAK complexes are involved in a variety of biological processes such as cell growth, differentiation, apoptosis, metabolism and immune regulation. Key mediator of a quality checkpoint during transcription elongation as part of the Integrator-PP2A (INTAC) complex. The INTAC complex drives premature transcription termination of transcripts that are unfavorably configured for transcriptional elongation: within the INTAC complex, acts as a scaffolding subunit for PPP2CA, which catalyzes dephosphorylation of the C-terminal domain (CTD) of Pol II subunit POLR2A/RPB1 and SUPT5H/SPT5, thereby preventing transcriptional elongation. Regulates the recruitment of the SKA complex to kinetochores. The protein is Serine/threonine-protein phosphatase 2A 65 kDa regulatory subunit A alpha isoform (PPP2R1A) of Bos taurus (Bovine).